The sequence spans 392 residues: Phosphoglycerate kinase (392 aa).

Substrate-binding positions include 21–23 (DFN), Arg36, 59–62 (HLGR), Arg118, and Arg151. ATP contacts are provided by residues Lys201, Gly292, Glu323, and 349-352 (GGDS).

It belongs to the phosphoglycerate kinase family. As to quaternary structure, monomer.

It is found in the cytoplasm. It carries out the reaction (2R)-3-phosphoglycerate + ATP = (2R)-3-phospho-glyceroyl phosphate + ADP. It participates in carbohydrate degradation; glycolysis; pyruvate from D-glyceraldehyde 3-phosphate: step 2/5. The chain is Phosphoglycerate kinase from Borrelia duttonii (strain Ly).